The primary structure comprises 81 residues: Exodeoxyribonuclease 7 small subunit (81 aa).

This sequence belongs to the XseB family. Heterooligomer composed of large and small subunits.

It localises to the cytoplasm. It carries out the reaction Exonucleolytic cleavage in either 5'- to 3'- or 3'- to 5'-direction to yield nucleoside 5'-phosphates.. Functionally, bidirectionally degrades single-stranded DNA into large acid-insoluble oligonucleotides, which are then degraded further into small acid-soluble oligonucleotides. The chain is Exodeoxyribonuclease 7 small subunit from Rhodopseudomonas palustris (strain BisA53).